The chain runs to 451 residues: Chromosomal replication initiator protein DnaA (451 aa).

Positions 1 to 82 (MENSLWKQCL…RLELQIGSSA (82 aa)) are domain I, interacts with DnaA modulators. The domain II stretch occupies residues 82–114 (AVVAPPRRRQVSVTTPSPSAAADQTPATRSAAS). Positions 85–112 (APPRRRQVSVTTPSPSAAADQTPATRSA) are disordered. The segment at 115-331 (NLNSNFTFDT…GALRRVVANA (217 aa)) is domain III, AAA+ region. ATP is bound by residues glycine 159, glycine 161, lysine 162, and threonine 163. Residues 332-451 (QFTGQEITVE…YSNLLRTLST (120 aa)) are domain IV, binds dsDNA.

This sequence belongs to the DnaA family. Oligomerizes as a right-handed, spiral filament on DNA at oriC.

The protein resides in the cytoplasm. Its function is as follows. Plays an essential role in the initiation and regulation of chromosomal replication. ATP-DnaA binds to the origin of replication (oriC) to initiate formation of the DNA replication initiation complex once per cell cycle. Binds the DnaA box (a 9 base pair repeat at the origin) and separates the double-stranded (ds)DNA. Forms a right-handed helical filament on oriC DNA; dsDNA binds to the exterior of the filament while single-stranded (ss)DNA is stabiized in the filament's interior. The ATP-DnaA-oriC complex binds and stabilizes one strand of the AT-rich DNA unwinding element (DUE), permitting loading of DNA polymerase. After initiation quickly degrades to an ADP-DnaA complex that is not apt for DNA replication. Binds acidic phospholipids. The chain is Chromosomal replication initiator protein DnaA from Alkalilimnicola ehrlichii (strain ATCC BAA-1101 / DSM 17681 / MLHE-1).